Reading from the N-terminus, the 203-residue chain is HTH-type transcriptional regulator CymR (203 aa).

An HTH tetR-type domain is found at 13–73 (METQGKLIAA…ATFEWLYEQI (61 aa)). Positions 36-55 (RIADVPGAAGVSRGAQSHHF) form a DNA-binding region, H-T-H motif.

Involved in the repression of the cym and cmt operons which are responsible of the p-cymene degradation. The protein is HTH-type transcriptional regulator CymR of Pseudomonas putida (Arthrobacter siderocapsulatus).